Here is a 247-residue protein sequence, read N- to C-terminus: Ribonuclease 3 (247 aa).

In terms of domain architecture, RNase III spans 21 to 149 (VDHQPLLDHL…LFGAIFRQHG (129 aa)). Residue Glu-62 coordinates Mg(2+). Residue Asp-66 is part of the active site. Residues Asp-135 and Glu-138 each contribute to the Mg(2+) site. Glu-138 is a catalytic residue. The DRBM domain maps to 176–244 (DWKTTLQEEL…AHQAFRKLRE (69 aa)).

The protein belongs to the ribonuclease III family. In terms of assembly, homodimer. The cofactor is Mg(2+).

It localises to the cytoplasm. It carries out the reaction Endonucleolytic cleavage to 5'-phosphomonoester.. Its function is as follows. Digests double-stranded RNA. Involved in the processing of primary rRNA transcript to yield the immediate precursors to the large and small rRNAs (23S and 16S). Processes some mRNAs, and tRNAs when they are encoded in the rRNA operon. Processes pre-crRNA and tracrRNA of type II CRISPR loci if present in the organism. This Corynebacterium glutamicum (strain ATCC 13032 / DSM 20300 / JCM 1318 / BCRC 11384 / CCUG 27702 / LMG 3730 / NBRC 12168 / NCIMB 10025 / NRRL B-2784 / 534) protein is Ribonuclease 3.